Consider the following 380-residue polypeptide: 1-deoxy-D-xylulose 5-phosphate reductoisomerase (380 aa).

Residues Thr10, Gly11, Ser12, Ile13, Gly36, Arg37, Asn38, and Asn120 each coordinate NADPH. Lys121 lines the 1-deoxy-D-xylulose 5-phosphate pocket. Glu122 contacts NADPH. Position 146 (Asp146) interacts with Mn(2+). Residues Ser147, Glu148, Ser172, and His195 each contribute to the 1-deoxy-D-xylulose 5-phosphate site. Glu148 contributes to the Mn(2+) binding site. Gly201 contacts NADPH. The 1-deoxy-D-xylulose 5-phosphate site is built by Ser208, Asn213, Lys214, and Glu217. Glu217 is a binding site for Mn(2+).

It belongs to the DXR family. Mg(2+) serves as cofactor. Mn(2+) is required as a cofactor.

It carries out the reaction 2-C-methyl-D-erythritol 4-phosphate + NADP(+) = 1-deoxy-D-xylulose 5-phosphate + NADPH + H(+). Its pathway is isoprenoid biosynthesis; isopentenyl diphosphate biosynthesis via DXP pathway; isopentenyl diphosphate from 1-deoxy-D-xylulose 5-phosphate: step 1/6. Catalyzes the NADPH-dependent rearrangement and reduction of 1-deoxy-D-xylulose-5-phosphate (DXP) to 2-C-methyl-D-erythritol 4-phosphate (MEP). In Listeria innocua serovar 6a (strain ATCC BAA-680 / CLIP 11262), this protein is 1-deoxy-D-xylulose 5-phosphate reductoisomerase.